Consider the following 141-residue polypeptide: Large ribosomal subunit protein uL11 (141 aa).

The protein belongs to the universal ribosomal protein uL11 family. In terms of assembly, part of the ribosomal stalk of the 50S ribosomal subunit. Interacts with L10 and the large rRNA to form the base of the stalk. L10 forms an elongated spine to which L12 dimers bind in a sequential fashion forming a multimeric L10(L12)X complex. Post-translationally, one or more lysine residues are methylated.

Forms part of the ribosomal stalk which helps the ribosome interact with GTP-bound translation factors. This Amoebophilus asiaticus (strain 5a2) protein is Large ribosomal subunit protein uL11.